Reading from the N-terminus, the 391-residue chain is uncharacterized protein (391 aa).

This is an uncharacterized protein from Methanocaldococcus jannaschii (strain ATCC 43067 / DSM 2661 / JAL-1 / JCM 10045 / NBRC 100440) (Methanococcus jannaschii).